A 108-amino-acid chain; its full sequence is Thioredoxin Asp f 28 (108 aa).

The Thioredoxin domain occupies 1–108 (MSHGKVIAVD…LEEMIKSISA (108 aa)). Residues cysteine 33 and cysteine 36 each act as nucleophile in the active site. An intrachain disulfide couples cysteine 33 to cysteine 36.

This sequence belongs to the thioredoxin family.

Functionally, participates in various redox reactions through the reversible oxidation of its active center dithiol to a disulfide and catalyzes dithiol-disulfide exchange reactions. The chain is Thioredoxin Asp f 28 from Aspergillus fumigatus (Neosartorya fumigata).